A 166-amino-acid polypeptide reads, in one-letter code: Ribosome maturation factor RimP (166 aa).

The protein belongs to the RimP family.

It localises to the cytoplasm. In terms of biological role, required for maturation of 30S ribosomal subunits. This chain is Ribosome maturation factor RimP, found in Psychrobacter arcticus (strain DSM 17307 / VKM B-2377 / 273-4).